The sequence spans 75 residues: uncharacterized protein (75 aa).

Positions Met1 to Ser19 are cleaved as a signal peptide.

As to expression, nacreous layer of shell (at protein level).

It localises to the secreted. This is an uncharacterized protein from Margaritifera margaritifera (Freshwater pearl mussel).